Here is an 895-residue protein sequence, read N- to C-terminus: Transcription factor SWI6 (895 aa).

The segment covering 1-45 (MASTVAGNSFVSQQHPGNLHSANLQSQSQGFRRQNSTSSVPSTAS) has biased composition (polar residues). The segment at 1–107 (MASTVAGNSF…SDQNVPQQPQ (107 aa)) is disordered. Positions 64 to 100 (MSSQQSQPPASQQSFSMSQTGSQPQPSQSSFRSYSDQ) are enriched in low complexity. One can recognise an HTH APSES-type domain in the interval 112 to 219 (IYTAVYSNVE…NRNPDGSVSQ (108 aa)). Positions 143 to 164 (ATQILKVAGVEKGKRTKILEKE) form a DNA-binding region, H-T-H motif. Disordered regions lie at residues 272–293 (ARFD…SFQR) and 323–358 (NMAF…NSFG). ANK repeat units lie at residues 458-488 (QCHT…PFRV) and 607-636 (AGDT…SPHI). A disordered region spans residues 653–684 (SDGAMKTKGDSGGDVENGDVGGSSQKSNESSN). Over residues 674–684 (GSSQKSNESSN) the composition is skewed to polar residues. Positions 698 to 759 (SANFQEEIKN…VTNLQRAEER (62 aa)) form a coiled coil.

The protein resides in the nucleus. Functionally, transcription factor that plays a role downstream of the MCK1-MKK2-MPS1 cascade. Required for hyphal morphogenesis and pathogenicity. Is an important oxidative stress response regulator and plays a positive role in the regulation of extracellular peroxidases. This is Transcription factor SWI6 from Pyricularia oryzae (strain 70-15 / ATCC MYA-4617 / FGSC 8958) (Rice blast fungus).